A 137-amino-acid polypeptide reads, in one-letter code: Ribosome-binding factor A (137 aa).

Belongs to the RbfA family. Monomer. Binds 30S ribosomal subunits, but not 50S ribosomal subunits or 70S ribosomes.

Its subcellular location is the cytoplasm. Its function is as follows. One of several proteins that assist in the late maturation steps of the functional core of the 30S ribosomal subunit. Associates with free 30S ribosomal subunits (but not with 30S subunits that are part of 70S ribosomes or polysomes). Required for efficient processing of 16S rRNA. May interact with the 5'-terminal helix region of 16S rRNA. In Allorhizobium ampelinum (strain ATCC BAA-846 / DSM 112012 / S4) (Agrobacterium vitis (strain S4)), this protein is Ribosome-binding factor A.